The following is a 442-amino-acid chain: U11/U12 small nuclear ribonucleoprotein 65 kDa protein (442 aa).

An RRM 1 domain is found at 28 to 102 (VTLLVRHLPD…KVLQVQRANK (75 aa)). Disordered regions lie at residues 101 to 138 (NKPNDNKKSRQIEESVTKGNAFSTVSTNNDSKSGQILS), 200 to 242 (LALP…GRKR), and 290 to 317 (SKVTQDEYKEESENEDPADEPKEKDSNL). Positions 102-116 (KPNDNKKSRQIEESV) are enriched in basic and acidic residues. The span at 117–136 (TKGNAFSTVSTNNDSKSGQI) shows a compositional bias: polar residues. The span at 200–209 (LALPTPPLPK) shows a compositional bias: pro residues. A compositionally biased stretch (acidic residues) spans 297–307 (YKEESENEDPA). The region spanning 352-434 (VVLYIKNLAK…KPMIIQFGRT (83 aa)) is the RRM 2 domain.

In terms of assembly, component of the U11/U12 snRNPs that are part of the U12-type spliceosome. Forms a complex with U12 snRNA. Ubiquitous.

It is found in the nucleus. Component of minor spliceosome required for U12-type intron splicing and alternative splicing of many introns. Binds specifically to U12 snRNA, which is necessary for branch-point site recognition. Required for normal plant development. This is U11/U12 small nuclear ribonucleoprotein 65 kDa protein (SNRNP65) from Arabidopsis thaliana (Mouse-ear cress).